The sequence spans 257 residues: UPF0246 protein AHA_3667 (257 aa).

Belongs to the UPF0246 family.

This chain is UPF0246 protein AHA_3667, found in Aeromonas hydrophila subsp. hydrophila (strain ATCC 7966 / DSM 30187 / BCRC 13018 / CCUG 14551 / JCM 1027 / KCTC 2358 / NCIMB 9240 / NCTC 8049).